Consider the following 138-residue polypeptide: Isochorismatase-like protein asqB (138 aa).

This sequence belongs to the isochorismatase family.

It carries out the reaction [(1'E)-5'-(3',3'-dimethyloxiran-2'-yl)-3'-hydroxy-3'-methylpent-1'-en-1'-yl]-quinolinone B = yaequinolone C. It participates in secondary metabolite biosynthesis. It functions in the pathway alkaloid biosynthesis. Its pathway is mycotoxin biosynthesis. Functionally, isochorismatase-like protein; part of the gene cluster that mediates the biosynthesis of the aspoquinolone mycotoxins. Within the pathway, asqB converts [(1'E)-5'-(3',3'-dimethyloxiran-2'-yl)-3'-hydroxy-3'-methylpent-1'-en-1'-yl]-quinolinone B into yaequinolone C. The first step of the pathway is catalyzed by the nonribosomal peptide synthetase asqK that condenses anthranilic acid and O-methyl-L-tyrosine to produce 4'-methoxycyclopeptin. 4'-methoxycyclopeptin is then converted to 4'-methoxydehydrocyclopeptin by the ketoglutarate-dependent dioxygenase asqJ. AsqJ also converts its first product 4'-methoxydehydrocyclopeptin to 4'-methoxycyclopenin. The following conversion of 4'-methoxycyclopenin into 4'-methoxyviridicatin is catalyzed by the cyclopenase asqI. 4'-methoxyviridicatin is the precursor of quinolone natural products, and is further converted to quinolinone B. The prenyltransferase asqH1 then catalyzes the canonical Friedel-Crafts alkylation of quinolinone B with dimethylallyl cation to yield dimethylallyl quinolone, which is subjected to FAD-dependent dehydrogenation by the FAD-linked oxidoreductase asqF to yield conjugated aryl diene. The delta(3') double bond then serves as the site of the second alkylation with DMAPP catalyzed by the prenyltransferase asqH2 to yield a carbenium ion intermediate, which can be attacked by H(2)O to yield a styrenyl quinolone containing a C3'-hydroxyprenyl chain. The FAD-dependent monooxygenase asqG performs epoxidation of the terminal C7'-C8' olefin. Finally, after dehydratation of the epoxide at C3 by asqC, the quinolone epoxide rearrangement protein asqO catalyzes an enzymatic 3-exo-tet cyclization to yield the cyclopropyl-THF ring system in aspoquinolone. The chain is Isochorismatase-like protein asqB from Emericella nidulans (strain FGSC A4 / ATCC 38163 / CBS 112.46 / NRRL 194 / M139) (Aspergillus nidulans).